The following is an 89-amino-acid chain: Small ribosomal subunit protein bS20 (89 aa).

Residues 1-20 are disordered; it reads MANHKSAEKRARQTIKRTER.

Belongs to the bacterial ribosomal protein bS20 family.

Its function is as follows. Binds directly to 16S ribosomal RNA. The polypeptide is Small ribosomal subunit protein bS20 (Campylobacter concisus (strain 13826)).